We begin with the raw amino-acid sequence, 157 residues long: Nuclear cap-binding protein subunit 2 (157 aa).

MRNA is bound by residues Tyr-17, Tyr-40, 109 to 113, 120 to 124, and 130 to 131; these read RADWD, RQYGR, and QV. In terms of domain architecture, RRM spans 37–115; sequence CTLYVGNLSY…RVIRADWDAG (79 aa).

Belongs to the RRM NCBP2 family. Component of the nuclear cap-binding complex (CBC), a heterodimer composed of ncbp-1 and ncbp-2 that interacts with m7GpppG-capped RNA.

Its subcellular location is the nucleus. In terms of biological role, component of the cap-binding complex (CBC), which binds co-transcriptionally to the 5' cap of pre-mRNAs and is involved in various processes such as pre-mRNA splicing and RNA-mediated gene silencing (RNAi). The CBC complex is involved in miRNA-mediated RNA interference and is required for primary microRNAs (miRNAs) processing. In the CBC complex, ncbp-2 recognizes and binds capped RNAs (m7GpppG-capped RNA) but requires ncbp-1 to stabilize the movement of its N-terminal loop and lock the CBC into a high affinity cap-binding state with the cap structure. In Caenorhabditis briggsae, this protein is Nuclear cap-binding protein subunit 2 (ncbp-2).